The chain runs to 311 residues: Putative methylthioribose-1-phosphate isomerase (311 aa).

Residues arginine 46 to alanine 48, arginine 80, and glutamine 174 each bind substrate. Aspartate 215 serves as the catalytic Proton donor. Asparagine 224–lysine 225 lines the substrate pocket.

The protein belongs to the eIF-2B alpha/beta/delta subunits family. MtnA subfamily.

It carries out the reaction 5-(methylsulfanyl)-alpha-D-ribose 1-phosphate = 5-(methylsulfanyl)-D-ribulose 1-phosphate. Catalyzes the interconversion of methylthioribose-1-phosphate (MTR-1-P) into methylthioribulose-1-phosphate (MTRu-1-P). The polypeptide is Putative methylthioribose-1-phosphate isomerase (Methanothermobacter thermautotrophicus (strain ATCC 29096 / DSM 1053 / JCM 10044 / NBRC 100330 / Delta H) (Methanobacterium thermoautotrophicum)).